We begin with the raw amino-acid sequence, 406 residues long: 4-hydroxy-3-methylbut-2-en-1-yl diphosphate synthase (ferredoxin) (406 aa).

[4Fe-4S] cluster is bound by residues C315, C318, C349, and E356.

The protein belongs to the IspG family. [4Fe-4S] cluster is required as a cofactor.

It carries out the reaction (2E)-4-hydroxy-3-methylbut-2-enyl diphosphate + 2 oxidized [2Fe-2S]-[ferredoxin] + H2O = 2-C-methyl-D-erythritol 2,4-cyclic diphosphate + 2 reduced [2Fe-2S]-[ferredoxin] + H(+). It participates in isoprenoid biosynthesis; isopentenyl diphosphate biosynthesis via DXP pathway; isopentenyl diphosphate from 1-deoxy-D-xylulose 5-phosphate: step 5/6. Functionally, converts 2C-methyl-D-erythritol 2,4-cyclodiphosphate (ME-2,4cPP) into 1-hydroxy-2-methyl-2-(E)-butenyl 4-diphosphate. The sequence is that of 4-hydroxy-3-methylbut-2-en-1-yl diphosphate synthase (ferredoxin) from Gloeothece citriformis (strain PCC 7424) (Cyanothece sp. (strain PCC 7424)).